Here is a 697-residue protein sequence, read N- to C-terminus: UBA domain-containing protein 7 (697 aa).

The tract at residues 1-94 is disordered; the sequence is MDDLLDFNFY…STPKSSNYDP (94 aa). Residues 13 to 32 show a composition bias toward low complexity; it reads STPSNQNNYSNNNSRTPSYS. A compositionally biased stretch (basic and acidic residues) spans 62–77; sequence KKTDNKISLKELERQK. Residues 81 to 92 show a composition bias toward polar residues; the sequence is PDSNSTPKSSNY. The UBA domain occupies 181–221; sequence KLSSNEMYEKLRDLGFSDDQSRLALENSGSLEDAIEYILEK. Residues 306–346 are disordered; the sequence is PEILPKTPIPKRKPHKVPMNEKVSEDRITTNQSRSGNDESS. Residues 323–333 show a composition bias toward basic and acidic residues; the sequence is PMNEKVSEDRI. Residues 334–345 show a composition bias toward polar residues; that stretch reads TTNQSRSGNDES. The stretch at 412-445 is one TPR repeat; the sequence is VEEQQSTGNELFRKGDFSQAIEEFTNSLSQLPAK. Positions 547–573 are disordered; it reads ISSHSSESHSKRTTQQPKSTPNHTNIK. Residues 559 to 573 show a composition bias toward polar residues; it reads TTQQPKSTPNHTNIK. In terms of domain architecture, J spans 633 to 696; it reads CRWQKVSLSE…AWELFKQQND (64 aa).

The protein is UBA domain-containing protein 7 (ucp7) of Schizosaccharomyces pombe (strain 972 / ATCC 24843) (Fission yeast).